Here is a 1136-residue protein sequence, read N- to C-terminus: Tyrosine-protein kinase receptor Tie-1 (1136 aa).

The N-terminal stretch at 1 to 23 is a signal peptide; the sequence is MVWLEPPLLLPIFFLASHVGAAV. The Extracellular segment spans residues 24–757; the sequence is DLTLLADLRL…IHAAEEGLDQ (734 aa). The Ig-like C2-type 1 domain occupies 43-106; sequence CVSGEAGAGR…PSDLVGVFSC (64 aa). N-linked (GlcNAc...) asparagine glycans are attached at residues Asn-84 and Asn-159. EGF-like domains lie at 212–254, 256–301, and 303–343; these read GCEA…TRCE, ACRE…SQCQ, and ACAP…MHCE. Disulfide bonds link Cys-226–Cys-235, Cys-229–Cys-242, and Cys-244–Cys-253. 3 disulfide bridges follow: Cys-317–Cys-325, Cys-319–Cys-331, and Cys-333–Cys-342. The Ig-like C2-type 2 domain occupies 370-424; the sequence is CAAAGNPFPVRGSMELRKPDGTVLLSTKAIVEPDRTTAEFEVPRLALGDSGLWEC. Fibronectin type-III domains are found at residues 444–543, 546–640, and 644–737; these read PPVP…CPEP, KPWL…LPPS, and APRH…TLGN. N-linked (GlcNAc...) asparagine glycans are attached at residues Asn-501, Asn-594, and Asn-707. A helical transmembrane segment spans residues 758-782; sequence QLVLAVVGSVSATCLTILAALLTLA. At 783-1136 the chain is on the cytoplasmic side; that stretch reads CIRKSCLHRR…AGIDATAEEA (354 aa). In terms of domain architecture, Protein kinase spans 837–1116; sequence ITFEDLIGEG…RMLEARKAYV (280 aa). Residues 843-851 and Lys-868 each bind ATP; that span reads IGEGNFGQV. The Proton acceptor role is filled by Asp-977. Tyr-1005 is subject to Phosphotyrosine; by autocatalysis.

The protein belongs to the protein kinase superfamily. Tyr protein kinase family. Tie subfamily. In terms of assembly, heterodimer with TEK/TIE2. Interacts with SVEP1 (via C-terminus). Phosphorylated on tyrosine residues in response to ANGPT1, most likely by TEK/TIE2. In terms of tissue distribution, specifically expressed in developing vascular endothelial cells.

Its subcellular location is the cell membrane. The enzyme catalyses L-tyrosyl-[protein] + ATP = O-phospho-L-tyrosyl-[protein] + ADP + H(+). Functionally, transmembrane tyrosine-protein kinase that may modulate TEK/TIE2 activity and contribute to the regulation of angiogenesis. In Bos taurus (Bovine), this protein is Tyrosine-protein kinase receptor Tie-1 (TIE1).